The following is a 279-amino-acid chain: Tryptophan 2,3-dioxygenase (279 aa).

Residues 48–52 (FIIQH), tyrosine 110, and arginine 114 each bind substrate. Histidine 237 provides a ligand contact to heme. Substrate is bound at residue threonine 251.

Belongs to the tryptophan 2,3-dioxygenase family. In terms of assembly, homotetramer. Heme serves as cofactor.

The catalysed reaction is L-tryptophan + O2 = N-formyl-L-kynurenine. It participates in amino-acid degradation; L-tryptophan degradation via kynurenine pathway; L-kynurenine from L-tryptophan: step 1/2. Heme-dependent dioxygenase that catalyzes the oxidative cleavage of the L-tryptophan (L-Trp) pyrrole ring and converts L-tryptophan to N-formyl-L-kynurenine. Catalyzes the oxidative cleavage of the indole moiety. The protein is Tryptophan 2,3-dioxygenase of Bradyrhizobium sp. (strain BTAi1 / ATCC BAA-1182).